Reading from the N-terminus, the 347-residue chain is Transcription termination/antitermination protein NusA (347 aa).

Residues glycine 112–threonine 184 form the S1 motif domain. In terms of domain architecture, KH spans alanine 287–arginine 347. The segment at aspartate 322–arginine 347 is disordered.

It belongs to the NusA family. In terms of assembly, monomer. Binds directly to the core enzyme of the DNA-dependent RNA polymerase and to nascent RNA.

It localises to the cytoplasm. Participates in both transcription termination and antitermination. The protein is Transcription termination/antitermination protein NusA of Mycobacterium bovis (strain ATCC BAA-935 / AF2122/97).